The chain runs to 508 residues: Proline--tRNA ligase 2 (508 aa).

The protein belongs to the class-II aminoacyl-tRNA synthetase family. ProS type 3 subfamily. Homodimer.

Its subcellular location is the cytoplasm. It catalyses the reaction tRNA(Pro) + L-proline + ATP = L-prolyl-tRNA(Pro) + AMP + diphosphate. In terms of biological role, catalyzes the attachment of proline to tRNA(Pro) in a two-step reaction: proline is first activated by ATP to form Pro-AMP and then transferred to the acceptor end of tRNA(Pro). In Bacillus anthracis, this protein is Proline--tRNA ligase 2.